We begin with the raw amino-acid sequence, 372 residues long: D-alanine--D-alanine ligase (372 aa).

An ATP-grasp domain is found at 145 to 349 (KTVLRAGGIP…CPNLLDQLIE (205 aa)). Residue 176–231 (DRWGTSELFVKAVSLGSSVATLPVKTETEFTKAVKEVFRYDDRLMVEPRIRGREIE) participates in ATP binding. Residues aspartate 303, glutamate 316, and asparagine 318 each coordinate Mg(2+).

It belongs to the D-alanine--D-alanine ligase family. It depends on Mg(2+) as a cofactor. Requires Mn(2+) as cofactor.

It localises to the cytoplasm. It catalyses the reaction 2 D-alanine + ATP = D-alanyl-D-alanine + ADP + phosphate + H(+). The protein operates within cell wall biogenesis; peptidoglycan biosynthesis. In terms of biological role, cell wall formation. This is D-alanine--D-alanine ligase from Coxiella burnetii (strain Dugway 5J108-111).